The chain runs to 40 residues: Plasma membrane ATPase proteolipid 1 (40 aa).

A propeptide spanning residues 1–2 is cleaved from the precursor; that stretch reads MT. A helical transmembrane segment spans residues 3–26; it reads LPGGVILVFILVGLACIAIIATII. Residues 27–40 are Cytoplasmic-facing; sequence YRKWQARQRGLQRF.

In terms of assembly, monomer and homodimer. Associated with the 100 kDa subunit of the plasma membrane H(+)-ATPase.

Its subcellular location is the cell membrane. The polypeptide is Plasma membrane ATPase proteolipid 1 (PMP1) (Saccharomyces cerevisiae (strain ATCC 204508 / S288c) (Baker's yeast)).